We begin with the raw amino-acid sequence, 466 residues long: Ribulose bisphosphate carboxylase large chain (466 aa).

K4 bears the N6,N6,N6-trimethyllysine mark. 2 residues coordinate substrate: N113 and T163. K165 acts as the Proton acceptor in catalysis. K167 is a binding site for substrate. Residues K191, D193, and E194 each coordinate Mg(2+). Residue K191 is modified to N6-carboxylysine. H284 acts as the Proton acceptor in catalysis. Substrate contacts are provided by R285, H317, and S369.

The protein belongs to the RuBisCO large chain family. Type I subfamily. Heterohexadecamer of 8 large chains and 8 small chains; disulfide-linked. The disulfide link is formed within the large subunit homodimers. Requires Mg(2+) as cofactor. Post-translationally, the disulfide bond which can form in the large chain dimeric partners within the hexadecamer appears to be associated with oxidative stress and protein turnover.

It is found in the plastid. It localises to the chloroplast. The enzyme catalyses 2 (2R)-3-phosphoglycerate + 2 H(+) = D-ribulose 1,5-bisphosphate + CO2 + H2O. The catalysed reaction is D-ribulose 1,5-bisphosphate + O2 = 2-phosphoglycolate + (2R)-3-phosphoglycerate + 2 H(+). Its function is as follows. RuBisCO catalyzes two reactions: the carboxylation of D-ribulose 1,5-bisphosphate, the primary event in carbon dioxide fixation, as well as the oxidative fragmentation of the pentose substrate in the photorespiration process. Both reactions occur simultaneously and in competition at the same active site. In Justicia odora (Water willow), this protein is Ribulose bisphosphate carboxylase large chain.